The chain runs to 543 residues: Chaperonin GroEL (543 aa).

ATP contacts are provided by residues 29–32 (TLGP), 86–90 (DGTTT), glycine 413, 477–479 (DAL), and aspartate 493.

Belongs to the chaperonin (HSP60) family. In terms of assembly, forms a cylinder of 14 subunits composed of two heptameric rings stacked back-to-back. Interacts with the co-chaperonin GroES.

The protein resides in the cytoplasm. The catalysed reaction is ATP + H2O + a folded polypeptide = ADP + phosphate + an unfolded polypeptide.. Together with its co-chaperonin GroES, plays an essential role in assisting protein folding. The GroEL-GroES system forms a nano-cage that allows encapsulation of the non-native substrate proteins and provides a physical environment optimized to promote and accelerate protein folding. The polypeptide is Chaperonin GroEL (Clostridium novyi (strain NT)).